The sequence spans 484 residues: Fumarate hydratase class II (484 aa).

Positions 1–22 are disordered; the sequence is MPSILDLPIGTGATGKRKESDS. Substrate contacts are provided by residues 110-112, 141-144, 151-153, and threonine 199; these read SGT, HPND, and SSN. Residue histidine 200 is the Proton donor/acceptor of the active site. Serine 330 is an active-site residue. Substrate contacts are provided by residues serine 331 and 336-338; that span reads KVN.

This sequence belongs to the class-II fumarase/aspartase family. Fumarase subfamily. In terms of assembly, homotetramer.

Its subcellular location is the cytoplasm. The enzyme catalyses (S)-malate = fumarate + H2O. It participates in carbohydrate metabolism; tricarboxylic acid cycle; (S)-malate from fumarate: step 1/1. Functionally, involved in the TCA cycle. Catalyzes the stereospecific interconversion of fumarate to L-malate. The protein is Fumarate hydratase class II of Methanosarcina acetivorans (strain ATCC 35395 / DSM 2834 / JCM 12185 / C2A).